The chain runs to 362 residues: Histidinol-phosphate aminotransferase 2 (362 aa).

At Lys-222 the chain carries N6-(pyridoxal phosphate)lysine.

The protein belongs to the class-II pyridoxal-phosphate-dependent aminotransferase family. Histidinol-phosphate aminotransferase subfamily. Homodimer. It depends on pyridoxal 5'-phosphate as a cofactor.

The enzyme catalyses L-histidinol phosphate + 2-oxoglutarate = 3-(imidazol-4-yl)-2-oxopropyl phosphate + L-glutamate. It participates in amino-acid biosynthesis; L-histidine biosynthesis; L-histidine from 5-phospho-alpha-D-ribose 1-diphosphate: step 7/9. The polypeptide is Histidinol-phosphate aminotransferase 2 (Carboxydothermus hydrogenoformans (strain ATCC BAA-161 / DSM 6008 / Z-2901)).